Consider the following 325-residue polypeptide: Tetraacyldisaccharide 4'-kinase (325 aa).

55 to 62 is a binding site for ATP; sequence TAGGNGKT.

Belongs to the LpxK family.

The enzyme catalyses a lipid A disaccharide + ATP = a lipid IVA + ADP + H(+). It participates in glycolipid biosynthesis; lipid IV(A) biosynthesis; lipid IV(A) from (3R)-3-hydroxytetradecanoyl-[acyl-carrier-protein] and UDP-N-acetyl-alpha-D-glucosamine: step 6/6. In terms of biological role, transfers the gamma-phosphate of ATP to the 4'-position of a tetraacyldisaccharide 1-phosphate intermediate (termed DS-1-P) to form tetraacyldisaccharide 1,4'-bis-phosphate (lipid IVA). This chain is Tetraacyldisaccharide 4'-kinase, found in Citrobacter koseri (strain ATCC BAA-895 / CDC 4225-83 / SGSC4696).